Here is a 499-residue protein sequence, read N- to C-terminus: GTPase Der (499 aa).

2 consecutive EngA-type G domains span residues 3 to 166 (PVVA…LETL) and 213 to 386 (IKFA…QSAT). GTP is bound by residues 9–16 (GRPNVGKS), 56–60 (DTGGI), 118–121 (NKTD), 219–226 (GRPNVGKS), 266–270 (DTAGV), and 331–334 (NKWD). In terms of domain architecture, KH-like spans 387-471 (RRTSTAMLTR…PIRVEFQESA (85 aa)). The segment at 476 to 499 (GRKNTMTLSQERQRKRLLKAKTKK) is disordered. Positions 488-499 (QRKRLLKAKTKK) are enriched in basic residues.

This sequence belongs to the TRAFAC class TrmE-Era-EngA-EngB-Septin-like GTPase superfamily. EngA (Der) GTPase family. Associates with the 50S ribosomal subunit.

Its function is as follows. GTPase that plays an essential role in the late steps of ribosome biogenesis. The polypeptide is GTPase Der (Aeromonas salmonicida (strain A449)).